The sequence spans 211 residues: MMNQSITPPTHPPMSQRFRGYLPVVVDVETGGFNWNHHALLEIACIPIEMDDTGRLYPGEVTSTHVIPAPGTDIDPKSLEVTGIILDHPFRFAKEEKLALEHIFTPVRTTMKKYKCQRAILVGHNAHFDLNFLNAAVTRTAYKRNPFHQFSVFDTVTLAGMAYGQTVLARAVQAAGLDWNAADAHSAVYDAEKTAHLFCTITNIWPLMVAG.

The 175-residue stretch at 24–198 (VVVDVETGGF…YDAEKTAHLF (175 aa)) folds into the Exonuclease domain. Mg(2+) contacts are provided by aspartate 27, glutamate 29, histidine 185, and aspartate 190. The active-site Proton donor/acceptor is the histidine 185.

Belongs to the RNase T family. As to quaternary structure, homodimer. Mg(2+) is required as a cofactor.

Its function is as follows. Trims short 3' overhangs of a variety of RNA species, leaving a one or two nucleotide 3' overhang. Responsible for the end-turnover of tRNA: specifically removes the terminal AMP residue from uncharged tRNA (tRNA-C-C-A). Also appears to be involved in tRNA biosynthesis. The sequence is that of Ribonuclease T from Xylella fastidiosa (strain Temecula1 / ATCC 700964).